We begin with the raw amino-acid sequence, 218 residues long: MIYTKNAYGSISYTYQDFIDLRYKGLHMEQKRILTLYSAIDFSGNRLEGQIPESIGLLKALIALNLSNNAFIGNIPMSMANLIELESLDMSRNGLSGTIPQGLKTLSFLGYINVSHNQLKGEIPQGTQITGPPKSSFEGNAGLCGLPLEESCFGTKVPPIQQSKKEDNQEDAKVLNWKAVATGYGPGVFFGLAIAQIIASYKPEWLVKIIGPNKRRNH.

At 1-178 (MIYTKNAYGS…QEDAKVLNWK (178 aa)) the chain is on the extracellular side. LRR repeat units lie at residues 34–58 (LTLY…IGLL), 59–82 (KALI…MANL), 83–106 (IELE…LKTL), and 108–131 (FLGY…QITG). A glycan (N-linked (GlcNAc...) asparagine) is linked at asparagine 65. Asparagine 113 is a glycosylation site (N-linked (GlcNAc...) asparagine). A helical membrane pass occupies residues 179–199 (AVATGYGPGVFFGLAIAQIIA). Topologically, residues 200 to 218 (SYKPEWLVKIIGPNKRRNH) are cytoplasmic.

The protein belongs to the RLP family.

It is found in the cell membrane. The protein is Putative receptor like protein 25 of Arabidopsis thaliana (Mouse-ear cress).